Here is a 518-residue protein sequence, read N- to C-terminus: Squalene monooxygenase 1,2 (518 aa).

The next 2 helical transmembrane spans lie at M3–F23 and G48–A68. FAD-binding positions include V58 to G59, E78 to R79, R86, F91, R158, V174, D337, and M350. The helical transmembrane segment at L448–P468 threads the bilayer.

It belongs to the squalene monooxygenase family. It depends on FAD as a cofactor.

It localises to the membrane. The enzyme catalyses squalene + reduced [NADPH--hemoprotein reductase] + O2 = (S)-2,3-epoxysqualene + oxidized [NADPH--hemoprotein reductase] + H2O + H(+). It participates in terpene metabolism; lanosterol biosynthesis; lanosterol from farnesyl diphosphate: step 2/3. Its function is as follows. Catalyzes the stereospecific oxidation of squalene to (S)-2,3-epoxysqualene, and is considered to be a rate-limiting enzyme in steroid biosynthesis. The polypeptide is Squalene monooxygenase 1,2 (SQP1,2) (Brassica napus (Rape)).